Consider the following 275-residue polypeptide: Fos-related antigen 1 (275 aa).

Disordered stretches follow at residues 1-33 and 71-115; these read MYRD…QTVQ and TYPQ…VRRE. Positions 7-33 are enriched in low complexity; that stretch reads EPGPSSGAGSAYGRPAQPQQAQTQTVQ. Positions 107–170 constitute a bZIP domain; the sequence is EERRRVRRER…ERLELVLEAH (64 aa). Residues 109–129 form a basic motif region; that stretch reads RRRVRRERNKLAAAKCRNRRK. Residues 135–163 form a leucine-zipper region; sequence LQAETDKLEDEKSGLQREIEELQKQKERL. Positions 171 to 184 are enriched in basic and acidic residues; the sequence is RPICKIPEEDKKDT. Residues 171–275 are disordered; the sequence is RPICKIPEED…PLGSPTLLAL (105 aa). Low complexity-rich tracts occupy residues 185 to 194, 219 to 237, and 256 to 275; these read GGTSSTSGAG, LHTP…TPSL, and SSSS…LLAL. Serine 269 is modified (phosphoserine).

Belongs to the bZIP family. Fos subfamily. As to quaternary structure, heterodimer. Interacts with the BAF multiprotein chromatin-remodeling complex subunits SMARCB1 and SMARCD1. Interacts with ARID1A and JUN.

Its subcellular location is the nucleus. The chain is Fos-related antigen 1 (Fosl1) from Rattus norvegicus (Rat).